The sequence spans 452 residues: Phosphoglucosamine mutase (452 aa).

The active-site Phosphoserine intermediate is the Ser108. Residues Ser108, Asp247, Asp249, and Asp251 each coordinate Mg(2+). Ser108 carries the post-translational modification Phosphoserine.

This sequence belongs to the phosphohexose mutase family. Mg(2+) serves as cofactor. Activated by phosphorylation.

The enzyme catalyses alpha-D-glucosamine 1-phosphate = D-glucosamine 6-phosphate. Catalyzes the conversion of glucosamine-6-phosphate to glucosamine-1-phosphate. In Paraburkholderia xenovorans (strain LB400), this protein is Phosphoglucosamine mutase.